Consider the following 237-residue polypeptide: D-aminoacyl-tRNA deacylase (237 aa).

It belongs to the DtdA deacylase family. Monomer. It depends on Zn(2+) as a cofactor.

It carries out the reaction a D-aminoacyl-tRNA + H2O = a tRNA + a D-alpha-amino acid + H(+). It catalyses the reaction glycyl-tRNA(Ala) + H2O = tRNA(Ala) + glycine + H(+). Functionally, D-aminoacyl-tRNA deacylase with broad substrate specificity. By recycling D-aminoacyl-tRNA to D-amino acids and free tRNA molecules, this enzyme counteracts the toxicity associated with the formation of D-aminoacyl-tRNA entities in vivo. The protein is D-aminoacyl-tRNA deacylase of Metallosphaera sedula (strain ATCC 51363 / DSM 5348 / JCM 9185 / NBRC 15509 / TH2).